Reading from the N-terminus, the 100-residue chain is MTKVTREEVEHIANLARLQISPEETEEMANTLESILDFAKQNDSADTEGIEPTYHVLDLQNVLRDDKAIEGIPQELALKNAKETEDGQFKVPSIMNGEDA.

It belongs to the GatC family. In terms of assembly, heterotrimer of A, B and C subunits.

The enzyme catalyses L-glutamyl-tRNA(Gln) + L-glutamine + ATP + H2O = L-glutaminyl-tRNA(Gln) + L-glutamate + ADP + phosphate + H(+). It catalyses the reaction L-aspartyl-tRNA(Asn) + L-glutamine + ATP + H2O = L-asparaginyl-tRNA(Asn) + L-glutamate + ADP + phosphate + 2 H(+). Its function is as follows. Allows the formation of correctly charged Asn-tRNA(Asn) or Gln-tRNA(Gln) through the transamidation of misacylated Asp-tRNA(Asn) or Glu-tRNA(Gln) in organisms which lack either or both of asparaginyl-tRNA or glutaminyl-tRNA synthetases. The reaction takes place in the presence of glutamine and ATP through an activated phospho-Asp-tRNA(Asn) or phospho-Glu-tRNA(Gln). The chain is Aspartyl/glutamyl-tRNA(Asn/Gln) amidotransferase subunit C from Staphylococcus epidermidis (strain ATCC 35984 / DSM 28319 / BCRC 17069 / CCUG 31568 / BM 3577 / RP62A).